The sequence spans 276 residues: Microtubule-associated protein RP/EB family member 1A (276 aa).

A Calponin-homology (CH) domain is found at 13–115; that stretch reads FVGRNEILTW…FLQWLKRFCD (103 aa). Residues 124-172 are disordered; sequence ENYNPVERRSRNGKERSVKGSNKIPKSLQTNNNHPPPNSSSVGLSKASG. Residues 129–141 are compositionally biased toward basic and acidic residues; that stretch reads VERRSRNGKERSV. The span at 162-172 shows a compositional bias: low complexity; that stretch reads SSSVGLSKASG. In terms of domain architecture, EB1 C-terminal spans 173–243; that stretch reads PKSAKAAEVQ…LYATDANESA (71 aa). Positions 252–276 are disordered; sequence NQSLGVEDDEAEGNGEQLEEEKTQA. A compositionally biased stretch (acidic residues) spans 257-270; the sequence is VEDDEAEGNGEQLE.

It belongs to the MAPRE family. In terms of assembly, homodimer and heterodimer with EB1B. Interacts with tobamovirus movement protein. In terms of tissue distribution, highly expressed in guard cells of leaf stomata, pollen grains and pollen tubes. Expressed in young roots.

The protein resides in the cytoplasm. It localises to the cytoskeleton. Its subcellular location is the spindle pole. The protein localises to the phragmoplast. Functionally, binds to the plus end of microtubules and regulates the dynamics of the microtubule cytoskeleton. May be involved in anchoring microtubules to their nucleation sites and/or functioning as a reservoir for distribution to the growing end. In plants, microtubule minus ends are not necessarily severed from the nucleation site and transported to the plus end of a microtubule as part of the recycling process. May play a role in endomembrane organization during polarized growth of plant cells. Interacts with the tobamovirus movement protein (MP) and may play a role in the association of MP with the microtubule system during infection. The chain is Microtubule-associated protein RP/EB family member 1A (EB1A) from Arabidopsis thaliana (Mouse-ear cress).